The following is a 219-amino-acid chain: Thiamine-phosphate synthase (219 aa).

4-amino-2-methyl-5-(diphosphooxymethyl)pyrimidine is bound by residues 44 to 48 and asparagine 79; that span reads QFREK. Mg(2+) contacts are provided by aspartate 80 and aspartate 99. Serine 117 serves as a coordination point for 4-amino-2-methyl-5-(diphosphooxymethyl)pyrimidine. 2-[(2R,5Z)-2-carboxy-4-methylthiazol-5(2H)-ylidene]ethyl phosphate is bound at residue 143 to 145; that stretch reads TST. Residue lysine 146 coordinates 4-amino-2-methyl-5-(diphosphooxymethyl)pyrimidine. 2-[(2R,5Z)-2-carboxy-4-methylthiazol-5(2H)-ylidene]ethyl phosphate is bound by residues glycine 175 and 195–196; that span reads IS.

Belongs to the thiamine-phosphate synthase family. Mg(2+) is required as a cofactor.

It carries out the reaction 2-[(2R,5Z)-2-carboxy-4-methylthiazol-5(2H)-ylidene]ethyl phosphate + 4-amino-2-methyl-5-(diphosphooxymethyl)pyrimidine + 2 H(+) = thiamine phosphate + CO2 + diphosphate. The catalysed reaction is 2-(2-carboxy-4-methylthiazol-5-yl)ethyl phosphate + 4-amino-2-methyl-5-(diphosphooxymethyl)pyrimidine + 2 H(+) = thiamine phosphate + CO2 + diphosphate. The enzyme catalyses 4-methyl-5-(2-phosphooxyethyl)-thiazole + 4-amino-2-methyl-5-(diphosphooxymethyl)pyrimidine + H(+) = thiamine phosphate + diphosphate. It functions in the pathway cofactor biosynthesis; thiamine diphosphate biosynthesis; thiamine phosphate from 4-amino-2-methyl-5-diphosphomethylpyrimidine and 4-methyl-5-(2-phosphoethyl)-thiazole: step 1/1. Its function is as follows. Condenses 4-methyl-5-(beta-hydroxyethyl)thiazole monophosphate (THZ-P) and 2-methyl-4-amino-5-hydroxymethyl pyrimidine pyrophosphate (HMP-PP) to form thiamine monophosphate (TMP). The sequence is that of Thiamine-phosphate synthase from Bacillus cereus (strain AH820).